The sequence spans 186 residues: dCTP deaminase (186 aa).

107 to 112 is a dCTP binding site; it reads KSTYAR. Residue glutamate 133 is the Proton donor/acceptor of the active site. Glutamine 152, tyrosine 166, and glutamine 176 together coordinate dCTP.

The protein belongs to the dCTP deaminase family. In terms of assembly, homotrimer.

The enzyme catalyses dCTP + H2O + H(+) = dUTP + NH4(+). The protein operates within pyrimidine metabolism; dUMP biosynthesis; dUMP from dCTP (dUTP route): step 1/2. In terms of biological role, catalyzes the deamination of dCTP to dUTP. This Campylobacter fetus subsp. fetus (strain 82-40) protein is dCTP deaminase.